We begin with the raw amino-acid sequence, 357 residues long: Histidine biosynthesis bifunctional protein HisB (357 aa).

The segment at 1-168 is histidinol-phosphatase; it reads MTPILFIDRD…GIAHALADAP (168 aa). The Nucleophile role is filled by aspartate 8. The Mg(2+) site is built by aspartate 8, aspartate 10, and aspartate 128. Aspartate 10 serves as the catalytic Proton donor. The segment at 169-357 is imidazoleglycerol-phosphate dehydratase; sequence RTAVVQRDTK…TALPSTKGAL (189 aa).

In the N-terminal section; belongs to the histidinol-phosphatase family. It in the C-terminal section; belongs to the imidazoleglycerol-phosphate dehydratase family. The cofactor is Mg(2+).

Its subcellular location is the cytoplasm. The catalysed reaction is D-erythro-1-(imidazol-4-yl)glycerol 3-phosphate = 3-(imidazol-4-yl)-2-oxopropyl phosphate + H2O. It catalyses the reaction L-histidinol phosphate + H2O = L-histidinol + phosphate. The protein operates within amino-acid biosynthesis; L-histidine biosynthesis; L-histidine from 5-phospho-alpha-D-ribose 1-diphosphate: step 6/9. Its pathway is amino-acid biosynthesis; L-histidine biosynthesis; L-histidine from 5-phospho-alpha-D-ribose 1-diphosphate: step 8/9. In Stenotrophomonas maltophilia (strain K279a), this protein is Histidine biosynthesis bifunctional protein HisB.